The following is a 102-amino-acid chain: MVLTKAAISENLFEKLQLTKKESKEFVEFFFEEVRKSLEKGEAVKLSGFGNFQIKKKKARPGRNPRTGEIFLITARRVVTFKAGQKLKNKINNYLIKKNNNF.

This sequence belongs to the bacterial histone-like protein family. As to quaternary structure, heterodimer of an alpha and a beta chain.

In terms of biological role, this protein is one of the two subunits of integration host factor, a specific DNA-binding protein that functions in genetic recombination as well as in transcriptional and translational control. The polypeptide is Integration host factor subunit alpha (Buchnera aphidicola subsp. Acyrthosiphon pisum (strain 5A)).